The chain runs to 618 residues: 1-deoxy-D-xylulose-5-phosphate synthase (618 aa).

Thiamine diphosphate contacts are provided by residues histidine 75 and 116 to 118 (GHS). Aspartate 147 is a binding site for Mg(2+). Thiamine diphosphate contacts are provided by residues 148–149 (GA), asparagine 176, tyrosine 283, and glutamate 364. Asparagine 176 contacts Mg(2+).

This sequence belongs to the transketolase family. DXPS subfamily. As to quaternary structure, homodimer. The cofactor is Mg(2+). It depends on thiamine diphosphate as a cofactor.

The catalysed reaction is D-glyceraldehyde 3-phosphate + pyruvate + H(+) = 1-deoxy-D-xylulose 5-phosphate + CO2. It participates in metabolic intermediate biosynthesis; 1-deoxy-D-xylulose 5-phosphate biosynthesis; 1-deoxy-D-xylulose 5-phosphate from D-glyceraldehyde 3-phosphate and pyruvate: step 1/1. Catalyzes the acyloin condensation reaction between C atoms 2 and 3 of pyruvate and glyceraldehyde 3-phosphate to yield 1-deoxy-D-xylulose-5-phosphate (DXP). The protein is 1-deoxy-D-xylulose-5-phosphate synthase of Thiobacillus denitrificans (strain ATCC 25259 / T1).